The chain runs to 534 residues: CTP synthase (534 aa).

The amidoligase domain stretch occupies residues 1–267 (MTKYIFVTGG…DQIVCDHLKL (267 aa)). Ser13 is a CTP binding site. Residue Ser13 coordinates UTP. 14–19 (SIGKGI) lines the ATP pocket. L-glutamine is bound at residue Tyr54. ATP is bound at residue Asp71. Mg(2+) contacts are provided by Asp71 and Glu141. CTP contacts are provided by residues 148–150 (DIE), 188–193 (KTKPTQ), and Lys224. Residues 188 to 193 (KTKPTQ) and Lys224 each bind UTP. The Glutamine amidotransferase type-1 domain occupies 292–534 (KIALVGKYVE…FVTAAVENAK (243 aa)). Gly354 provides a ligand contact to L-glutamine. The active-site Nucleophile; for glutamine hydrolysis is the Cys381. L-glutamine is bound by residues 382 to 385 (LGMQ), Glu405, and Arg463. Active-site residues include His508 and Glu510.

Belongs to the CTP synthase family. As to quaternary structure, homotetramer.

It catalyses the reaction UTP + L-glutamine + ATP + H2O = CTP + L-glutamate + ADP + phosphate + 2 H(+). It carries out the reaction L-glutamine + H2O = L-glutamate + NH4(+). The catalysed reaction is UTP + NH4(+) + ATP = CTP + ADP + phosphate + 2 H(+). It participates in pyrimidine metabolism; CTP biosynthesis via de novo pathway; CTP from UDP: step 2/2. With respect to regulation, allosterically activated by GTP, when glutamine is the substrate; GTP has no effect on the reaction when ammonia is the substrate. The allosteric effector GTP functions by stabilizing the protein conformation that binds the tetrahedral intermediate(s) formed during glutamine hydrolysis. Inhibited by the product CTP, via allosteric rather than competitive inhibition. Catalyzes the ATP-dependent amination of UTP to CTP with either L-glutamine or ammonia as the source of nitrogen. Regulates intracellular CTP levels through interactions with the four ribonucleotide triphosphates. This chain is CTP synthase, found in Streptococcus thermophilus (strain CNRZ 1066).